Reading from the N-terminus, the 346-residue chain is NADH-ubiquinone oxidoreductase chain 2 (346 aa).

10 consecutive transmembrane segments (helical) span residues 25-45 (HWIL…PLIS), 52-72 (AIEA…LILF), 95-115 (CLML…HFWF), 124-144 (LITA…LLLL), 149-169 (LNTT…GWMG), 178-198 (ILAF…SYNP), 200-220 (LTIL…LSLA), 242-262 (ATVM…GFMP), 274-294 (EMTP…FFYL), and 326-346 (AILT…ITML).

Belongs to the complex I subunit 2 family. As to quaternary structure, core subunit of respiratory chain NADH dehydrogenase (Complex I) which is composed of 45 different subunits.

It localises to the mitochondrion inner membrane. It catalyses the reaction a ubiquinone + NADH + 5 H(+)(in) = a ubiquinol + NAD(+) + 4 H(+)(out). Functionally, core subunit of the mitochondrial membrane respiratory chain NADH dehydrogenase (Complex I) which catalyzes electron transfer from NADH through the respiratory chain, using ubiquinone as an electron acceptor. Essential for the catalytic activity and assembly of complex I. The polypeptide is NADH-ubiquinone oxidoreductase chain 2 (MT-ND2) (Gallus gallus (Chicken)).